Here is a 104-residue protein sequence, read N- to C-terminus: A-type ATP synthase subunit F (104 aa).

This sequence belongs to the V-ATPase F subunit family. As to quaternary structure, has multiple subunits with at least A(3), B(3), C, D, E, F, H, I and proteolipid K(x).

It is found in the cell membrane. In terms of biological role, component of the A-type ATP synthase that produces ATP from ADP in the presence of a proton gradient across the membrane. This is A-type ATP synthase subunit F from Thermoplasma acidophilum (strain ATCC 25905 / DSM 1728 / JCM 9062 / NBRC 15155 / AMRC-C165).